We begin with the raw amino-acid sequence, 156 residues long: Transcription antitermination protein NusB (156 aa).

It belongs to the NusB family.

Involved in transcription antitermination. Required for transcription of ribosomal RNA (rRNA) genes. Binds specifically to the boxA antiterminator sequence of the ribosomal RNA (rrn) operons. This chain is Transcription antitermination protein NusB, found in Rickettsia africae (strain ESF-5).